Here is a 222-residue protein sequence, read N- to C-terminus: Pyridoxal phosphate homeostasis protein (222 aa).

Lys-35 bears the N6-(pyridoxal phosphate)lysine mark.

This sequence belongs to the pyridoxal phosphate-binding protein YggS/PROSC family.

Its function is as follows. Pyridoxal 5'-phosphate (PLP)-binding protein, which is involved in PLP homeostasis. This chain is Pyridoxal phosphate homeostasis protein, found in Helicobacter pylori (strain ATCC 700392 / 26695) (Campylobacter pylori).